The sequence spans 874 residues: Envelope glycoprotein B (874 aa).

The first 25 residues, 1–25 (MGVGGGPRVVLCLWCVAALLCQGVA), serve as a signal peptide directing secretion. At 26-727 (QEVVAETTTP…SGVISFFKNP (702 aa)) the chain is on the virion surface side. Cystine bridges form between Cys-59/Cys-523, Cys-77/Cys-479, Cys-149/Cys-214, Cys-306/Cys-353, and Cys-546/Cys-583. An involved in fusion and/or binding to host membrane region spans residues 116 to 122 (IYKGWSE). The N-linked (GlcNAc...) asparagine; by host glycan is linked to Asn-171. The tract at residues 200–208 (RNLLWSYTT) is involved in fusion and/or binding to host membrane. Asn-247, Asn-281, Asn-302, Asn-323, Asn-348, Asn-356, Asn-376, Asn-409, Asn-412, Asn-444, Asn-558, Asn-610, and Asn-624 each carry an N-linked (GlcNAc...) asparagine; by host glycan. Residues 412 to 450 (NATASPTSTPTTSPRRRRRDTSSVSGGGNNGDNSTKEES) are disordered. The interval 673–725 (LDDSIDHGRDSFIQTLGDIMQDLGTIGKVVVNVASGVFSLFGSIVSGVISFFK) is hydrophobic membrane proximal region. Residues 728–748 (FGGMLLIVLIIAGVVVVYLFM) traverse the membrane as a helical segment. Residues 749–874 (TRSRSIYSAP…VEAGTADTGV (126 aa)) are Intravirion-facing. Residues 830–874 (RRGGGGYQRLQRDGSDDEGDYEPLRRQDGGYDDVDVEAGTADTGV) are disordered. Residues 836-839 (YQRL) carry the Internalization motif motif.

This sequence belongs to the herpesviridae glycoprotein B family. Homotrimer; disulfide-linked. Binds to heparan sulfate proteoglycans. Interacts with gH/gL heterodimer. Post-translationally, a proteolytic cleavage by host furin generates two subunits that remain linked by disulfide bonds.

Its subcellular location is the virion membrane. The protein resides in the host cell membrane. It is found in the host endosome membrane. It localises to the host Golgi apparatus membrane. Envelope glycoprotein that forms spikes at the surface of virion envelope. Essential for the initial attachment to heparan sulfate moieties of the host cell surface proteoglycans. Involved in fusion of viral and cellular membranes leading to virus entry into the host cell. Following initial binding to its host receptors, membrane fusion is mediated by the fusion machinery composed at least of gB and the heterodimer gH/gL. May be involved in the fusion between the virion envelope and the outer nuclear membrane during virion egress. The polypeptide is Envelope glycoprotein B (Equus caballus (Horse)).